The chain runs to 186 residues: MKTAHEVRPGNVIMLDGNPWVVLKTETSRSGRNAAVVKLKLKNVLLDSTTETSFKGEDKLDVIVLDRLDCTYSYFADPMYVFMDEEFNQYDVEAENLGDAAAYITDGMEDVCQVTFYEEKAISVELPIIVTREVTYTEPSARGDTSGKVMKPATIAGGSTLSVADFVKTGDMIEIDTRTNEFKKRV.

This sequence belongs to the elongation factor P family.

Its subcellular location is the cytoplasm. It participates in protein biosynthesis; polypeptide chain elongation. Functionally, involved in peptide bond synthesis. Stimulates efficient translation and peptide-bond synthesis on native or reconstituted 70S ribosomes in vitro. Probably functions indirectly by altering the affinity of the ribosome for aminoacyl-tRNA, thus increasing their reactivity as acceptors for peptidyl transferase. The polypeptide is Elongation factor P (Shewanella piezotolerans (strain WP3 / JCM 13877)).